We begin with the raw amino-acid sequence, 370 residues long: DNA-directed RNA polymerase II subunit GRINL1A (370 aa).

The interval 1 to 20 (MSSLPRGFEPQTPEDLGQRS) is disordered. Residues 15 to 69 (DLGQRSLAELREMLKRQERLLRNVKFICKLPDKGKKISDAVTKLKAAIAEREEVR) adopt a coiled-coil conformation. The important for transcription repressor activity stretch occupies residues 29-68 (KRQERLLRNVKFICKLPDKGKKISDAVTKLKAAIAEREEV). Disordered stretches follow at residues 93-172 (DGDR…ASEG), 204-226 (DPTEHHSEGNRNPENLAGLWSGP), and 241-283 (KNPM…RRDR). Over residues 101–131 (NSDQILDTSSPVPGCSSVANITSSQTTSRQQ) the composition is skewed to polar residues. Residues 138-152 (RGGDAEAAEAEHTVS) show a composition bias toward basic and acidic residues. Over residues 155–170 (PTSSSGAPAPSSSQAS) the composition is skewed to low complexity. A compositionally biased stretch (basic and acidic residues) spans 205–214 (PTEHHSEGNR). Residues 228–299 (KKPHYMEVLE…TAARLLPLHH (72 aa)) form an interaction with Pol II region. A compositionally biased stretch (polar residues) spans 254–266 (VLPSQPRDSSSAC). Phosphoserine is present on S271. Residues 300–315 (LPTQLLSIEESLALQR) are important for transcription repressor activity. Positions 303–328 (QLLSIEESLALQRQQKQSYEEIQAKL) form a coiled coil. The interval 316–341 (QQKQSYEEIQAKLAAQKLAERLNIKM) is interaction with Pol II. A disordered region spans residues 340–370 (KMQSYNPEGESSRKYREVRDEDDDQSSEDEF). Over residues 349–358 (ESSRKYREVR) the composition is skewed to basic and acidic residues. Residues 359-370 (DEDDDQSSEDEF) are compositionally biased toward acidic residues.

It belongs to the GRINL1 family. Component of the Pol II(G) complex, which contains the RNA polymerase II (Pol II) core complex subunits and POLR2M and appears to be an abundant form of Pol II. Dephosphorylated at Ser-271 by the PNUTS-PP1 complex, promoting RNA polymerase II transcription pause-release.

The protein resides in the nucleus. Its function is as follows. Appears to be a stable component of the Pol II(G) complex form of RNA polymerase II (Pol II). Pol II synthesizes mRNA precursors and many functional non-coding RNAs and is the central component of the basal RNA polymerase II transcription machinery. May play a role in Mediator complex-dependent regulation of transcription activation. Acts in vitro as a negative regulator of transcriptional activation; this repression is relieved by the Mediator complex, which restores Pol II(G) activator-dependent transcription to a level equivalent to that of Pol II. The protein is DNA-directed RNA polymerase II subunit GRINL1A (POLR2M) of Bos taurus (Bovine).